Reading from the N-terminus, the 463-residue chain is Exodeoxyribonuclease 7 large subunit (463 aa).

Belongs to the XseA family. In terms of assembly, heterooligomer composed of large and small subunits.

It is found in the cytoplasm. The catalysed reaction is Exonucleolytic cleavage in either 5'- to 3'- or 3'- to 5'-direction to yield nucleoside 5'-phosphates.. In terms of biological role, bidirectionally degrades single-stranded DNA into large acid-insoluble oligonucleotides, which are then degraded further into small acid-soluble oligonucleotides. This Klebsiella pneumoniae subsp. pneumoniae (strain ATCC 700721 / MGH 78578) protein is Exodeoxyribonuclease 7 large subunit.